The following is a 559-amino-acid chain: CRISPR-associated exonuclease Cas4/endonuclease Cas1 fusion (559 aa).

The interval 1-198 (MAETDGSIPL…RCSLVGICLP (198 aa)) is CRISPR-associated exonuclease Cas4. A [4Fe-4S] cluster-binding site is contributed by cysteine 22. Mn(2+)-binding residues include aspartate 87 and aspartate 100. Cysteine 187, cysteine 190, and cysteine 196 together coordinate [4Fe-4S] cluster. Positions 224 to 559 (LYVQSPKAYV…IPAYPNFVTR (336 aa)) are CRISPR-associated endonuclease Cas1. Mn(2+) contacts are provided by glutamate 380, histidine 451, and glutamate 466.

It in the N-terminal section; belongs to the CRISPR-associated exonuclease Cas4 family. The protein in the C-terminal section; belongs to the CRISPR-associated endonuclease Cas1 family. As to quaternary structure, homodimer, forms a heterotetramer with a Cas2 homodimer. It depends on [4Fe-4S] cluster as a cofactor. The cofactor is Mg(2+). Requires Mn(2+) as cofactor.

It carries out the reaction exonucleolytic cleavage in the 5'- to 3'-direction to yield nucleoside 3'-phosphates.. In terms of biological role, CRISPR (clustered regularly interspaced short palindromic repeat), is an adaptive immune system that provides protection against mobile genetic elements (viruses, transposable elements and conjugative plasmids). CRISPR clusters contain spacers, sequences complementary to antecedent mobile elements, and target invading nucleic acids. CRISPR clusters are transcribed and processed into CRISPR RNA (crRNA). The Cas4 region acts as a ssDNA exonuclease, while the Cas1 region acts as a dsDNA endonuclease. Involved in the integration of spacer DNA into the CRISPR cassette. The protein is CRISPR-associated exonuclease Cas4/endonuclease Cas1 fusion (cas4-cas1) of Geobacter sulfurreducens (strain ATCC 51573 / DSM 12127 / PCA).